Consider the following 853-residue polypeptide: Deubiquitinase otu (853 aa).

The tract at residues M1–Y20 is disordered. The OTU domain maps to L29–V150. D37 is an active-site residue. Catalysis depends on S40, which acts as the Nucleophile. H143 is a catalytic residue. The 61-residue stretch at N336–P396 folds into the Tudor domain. The interval P396–H853 is LC domain. Residues Q460 to P470 show a composition bias toward basic and acidic residues. Disordered stretches follow at residues Q460–M531, A681–S704, G732–G794, and N817–H853. Over residues S499–S517 the composition is skewed to low complexity. Residues N747–S758 show a composition bias toward polar residues. The segment covering L769–I778 has biased composition (pro residues). 2 stretches are compositionally biased toward low complexity: residues A783 to G794 and P820 to S838.

Self aggregates, forming amyloid-like fibrillar helical structures; protein aggregation is mediated by the C-terminal LC domain, is enhanced by RNA binding and is essential for deubiquitinase activity. Interacts (via OTU domain) with bam (via C-terminus); the interaction enhances otu aggregation and deubiquitinase activity. Together with bam interacts with CycA/cyclin-A; the interaction stabilizes CycA by promoting its deubiquitination. Together with bam interacts with Traf6. Interacts with Hrb27C; the interaction is RNA-independent. Associates (via N-terminus) with mRNP complexes; the interaction is weak. Expressed at high levels in the ovary, at low levels in the brain and fat body, and at moderate levels in the gut.

It is found in the cytoplasm. It localises to the cell cortex. The protein resides in the perinuclear region. Its activity is regulated as follows. Activated by protein aggregation, which is mediated by the LC domain and enhanced by RNA binding. Its function is as follows. Catalytic component of a deubiquitinase complex consisting of bam and otu. The complex deubiquitinates K63-linked polyubiquitinated proteins; this antagonizes the ubiquitination activity of Traf6 and regulates the IMD immune signaling pathway. Otu-bam deubiquitinase activity is regulated by Traf6 dependent immune signaling regulation of bam expression levels; this forms a feedback loop that regulates the IMD immune signaling pathway and balances gut immune activity during aging. The complex deubiquitinates and stabilizes CycA/cyclin-A to regulate CycA-dependent differentiation. Involved in grk mRNA localization to the dorsal anterior region of the oocyte required for dorsal-ventral axis determination; may function as a ribonuclear protein complex together with sqd and Hrb27C. May regulate actin cytoskeleton organization in differentiating cystocytes during fusome maturation; required for efficient nurse cell cytoplasmic dumping during oogenesis. Essential for female fertility; involved in germ cell proliferation and germ cell differentiation. Functionally, involved in the early stages of germ cell proliferation and differentiation during oogenesis. Required for polytene chromosome dispersal in nurse cells during oogenesis. In terms of biological role, involved in the later stages of germ cell proliferation and differentiation during oogenesis. The protein is Deubiquitinase otu of Drosophila melanogaster (Fruit fly).